The sequence spans 455 residues: Pentatricopeptide repeat-containing protein At3g26630, chloroplastic (455 aa).

Residues 1-19 (MAAPSPSSPPNLLSPPPFR) constitute a chloroplast transit peptide. PPR repeat units lie at residues 51 to 81 (DQLLVRQLISVSSSFGETQYASLVFNQLQSP), 82 to 117 (STFTWNLMIRSLSVNHKPREALLLFILMMISHQSQF), 118 to 152 (DKFTFPFVIKACLASSSIRLGTQVHGLAIKAGFFN), 153 to 187 (DVFFQNTLMDLYFKCGKPDSGRKVFDKMPGRSIVS), 188 to 214 (WTTMLYGLVSNSQLDSAEIVFNQMPMR), 215 to 249 (NVVSWTAMITAYVKNRRPDEAFQLFRRMQVDDVKP), 250 to 284 (NEFTIVNLLQASTQLGSLSMGRWVHDYAHKNGFVL), 285 to 315 (DCFLGTALIDMYSKCGSLQDARKVFDVMQGK), 316 to 350 (SLATWNSMITSLGVHGCGEEALSLFEEMEEEASVE), 352 to 387 (DAITFVGVLSACANTGNVKDGLRYFTRMIQVYGISP), and 388 to 418 (IREHNACMIQLLEQALEVEKASNLVESMDSD).

This sequence belongs to the PPR family. PCMP-A subfamily.

It localises to the plastid. The protein localises to the chloroplast. This chain is Pentatricopeptide repeat-containing protein At3g26630, chloroplastic (PCMP-A6), found in Arabidopsis thaliana (Mouse-ear cress).